Reading from the N-terminus, the 89-residue chain is Small ribosomal subunit protein uS15 (89 aa).

This sequence belongs to the universal ribosomal protein uS15 family. In terms of assembly, part of the 30S ribosomal subunit. Forms a bridge to the 50S subunit in the 70S ribosome, contacting the 23S rRNA.

In terms of biological role, one of the primary rRNA binding proteins, it binds directly to 16S rRNA where it helps nucleate assembly of the platform of the 30S subunit by binding and bridging several RNA helices of the 16S rRNA. Its function is as follows. Forms an intersubunit bridge (bridge B4) with the 23S rRNA of the 50S subunit in the ribosome. In Vibrio cholerae serotype O1 (strain ATCC 39541 / Classical Ogawa 395 / O395), this protein is Small ribosomal subunit protein uS15.